The chain runs to 230 residues: Flagellar L-ring protein (230 aa).

Positions Met1–Ala15 are cleaved as a signal peptide. Cys16 carries N-palmitoyl cysteine lipidation. Cys16 is lipidated: S-diacylglycerol cysteine.

Belongs to the FlgH family. The basal body constitutes a major portion of the flagellar organelle and consists of four rings (L,P,S, and M) mounted on a central rod.

The protein localises to the cell outer membrane. It is found in the bacterial flagellum basal body. Its function is as follows. Assembles around the rod to form the L-ring and probably protects the motor/basal body from shearing forces during rotation. The polypeptide is Flagellar L-ring protein (Xanthomonas euvesicatoria pv. vesicatoria (strain 85-10) (Xanthomonas campestris pv. vesicatoria)).